A 209-amino-acid polypeptide reads, in one-letter code: PRA1 family protein A3 (209 aa).

The next 4 helical transmembrane spans lie at 51–72 (LYYY…ALIT), 76–98 (AILG…AATF), 143–163 (LVFV…SCGL), and 164–184 (LWVL…ASLR).

Belongs to the PRA1 family.

The protein resides in the endosome membrane. May be involved in both secretory and endocytic intracellular trafficking in the endosomal/prevacuolar compartments. The sequence is that of PRA1 family protein A3 (PRA1A3) from Arabidopsis thaliana (Mouse-ear cress).